The chain runs to 186 residues: Hydra actinoporin-like toxin 1 (186 aa).

Positions 1–18 are cleaved as a signal peptide; the sequence is MLLYICLVNLLLPLSVGA. Residues 29–48 are N-terminal region; sequence KVGVDAALQQIDDVWKGKTV. Positions 158–160 match the Cell attachment site, crucial for protein stability motif; sequence RAG.

It belongs to the actinoporin family. HALT subfamily. As to quaternary structure, octamer or nonamer in membranes. Monomer in the soluble state. In vitro, interacts with folate receptor alpha (of target organism). In terms of tissue distribution, expressed female germline during oogenesis.

It is found in the nematocyst. The protein localises to the secreted. Its subcellular location is the target cell membrane. Pore-forming protein that forms hydrophilic pores and causes cytolysis. Compared to equinatoxin-2 (AC P61914), it reveals lower cytolysis activity (5-12-fold difference, tested on erythrocytes), a larger pore size (probably 2-3 nm) and different affinity to membrane lipids (100-fold lower affinity to sphingomyelin). Binds to sulfatides (SFT) as well as to the two sphingolipids, lysophosphatidic acid (LPA) and sphingosine-1-phosphate (S1P). It seems to bind more strongly to LPA than to S1P and SFT. Shows cytolytic activity on HeLa cells, with a different potency than its paralogs (from most potent to less potent: HALT-4&gt;HALT-6~HALT-1&gt;HALT-3&gt;HALT-7&gt;HALT-2). Pore formation is a multi-step process that involves specific recognition of membrane lipid by a protein aromatic residues rich region, firm binding to the membrane (mainly driven by hydrophobic interactions) accompanied by the transfer of the N-terminal region to the lipid-water interface and finally pore formation after oligomerization of monomers. In vitro, binds to the folate receptor alpha (FOLR1), a GPI-anchored membrane protein that plays a major role in the uptake of folate/folic acid into cells via endocytosis, suggesting a possible involvement of this receptor in the mechanism of HALT-1-induced cell lysis. In vivo, does not cause visible paralysis in larvae of the blowfly Sarcophaga faculata, the most common arthropod prey of Hydra. This chain is Hydra actinoporin-like toxin 1, found in Hydra vulgaris (Hydra).